Reading from the N-terminus, the 331-residue chain is Adenosine deaminase (331 aa).

Histidine 12 and histidine 14 together coordinate Zn(2+). Histidine 14, aspartate 16, and glycine 170 together coordinate substrate. Zn(2+) is bound at residue histidine 197. Glutamate 200 acts as the Proton donor in catalysis. Residue aspartate 278 participates in Zn(2+) binding.

The protein belongs to the metallo-dependent hydrolases superfamily. Adenosine and AMP deaminases family. Adenosine deaminase subfamily. It depends on Zn(2+) as a cofactor.

It carries out the reaction adenosine + H2O + H(+) = inosine + NH4(+). It catalyses the reaction 2'-deoxyadenosine + H2O + H(+) = 2'-deoxyinosine + NH4(+). Its function is as follows. Catalyzes the hydrolytic deamination of adenosine and 2-deoxyadenosine. The protein is Adenosine deaminase of Clostridium botulinum (strain 657 / Type Ba4).